Reading from the N-terminus, the 21-residue chain is Protein YmjD (21 aa).

The polypeptide is Protein YmjD (ymjD) (Escherichia coli (strain K12)).